The following is a 164-amino-acid chain: Transcriptional repressor NrdR (164 aa).

A zinc finger spans residues 3–34 (CPFCRHEDSRVVDSRSLDDGSAIRRRRQCQAC). An ATP-cone domain is found at 46-136 (LTVVKRSGVA…VYRDFESLDD (91 aa)).

The protein belongs to the NrdR family. It depends on Zn(2+) as a cofactor.

In terms of biological role, negatively regulates transcription of bacterial ribonucleotide reductase nrd genes and operons by binding to NrdR-boxes. The chain is Transcriptional repressor NrdR from Micrococcus luteus (strain ATCC 4698 / DSM 20030 / JCM 1464 / CCM 169 / CCUG 5858 / IAM 1056 / NBRC 3333 / NCIMB 9278 / NCTC 2665 / VKM Ac-2230) (Micrococcus lysodeikticus).